A 287-amino-acid polypeptide reads, in one-letter code: Cell division protein ZipA (287 aa).

Residue M1 is a topological domain, periplasmic. A helical membrane pass occupies residues 2–22; the sequence is EIGLREWLIVIGIIVIAGILF. Topologically, residues 23 to 287 are cytoplasmic; the sequence is DGWRRMRGGK…FERRALTQKR (265 aa). The segment at 70-143 is disordered; the sequence is LDEHDLPSMS…APRQSVNDQP (74 aa).

Belongs to the ZipA family. In terms of assembly, interacts with FtsZ via their C-terminal domains.

It localises to the cell inner membrane. In terms of biological role, essential cell division protein that stabilizes the FtsZ protofilaments by cross-linking them and that serves as a cytoplasmic membrane anchor for the Z ring. Also required for the recruitment to the septal ring of downstream cell division proteins. The protein is Cell division protein ZipA of Pseudomonas fluorescens (strain SBW25).